Consider the following 178-residue polypeptide: Large ribosomal subunit protein uL6 (178 aa).

Belongs to the universal ribosomal protein uL6 family. Part of the 50S ribosomal subunit.

Functionally, this protein binds to the 23S rRNA, and is important in its secondary structure. It is located near the subunit interface in the base of the L7/L12 stalk, and near the tRNA binding site of the peptidyltransferase center. In Francisella philomiragia subsp. philomiragia (strain ATCC 25017 / CCUG 19701 / FSC 153 / O#319-036), this protein is Large ribosomal subunit protein uL6.